We begin with the raw amino-acid sequence, 156 residues long: Small ribosomal subunit protein uS7 (156 aa).

The protein belongs to the universal ribosomal protein uS7 family. As to quaternary structure, part of the 30S ribosomal subunit. Contacts proteins S9 and S11.

Functionally, one of the primary rRNA binding proteins, it binds directly to 16S rRNA where it nucleates assembly of the head domain of the 30S subunit. Is located at the subunit interface close to the decoding center, probably blocks exit of the E-site tRNA. The sequence is that of Small ribosomal subunit protein uS7 from Clostridioides difficile (strain 630) (Peptoclostridium difficile).